Here is a 438-residue protein sequence, read N- to C-terminus: Trigger factor (438 aa).

Residues 160-245 (DDKVTIDFVG…VKKIQQAELP (86 aa)) form the PPIase FKBP-type domain.

Belongs to the FKBP-type PPIase family. Tig subfamily.

The protein resides in the cytoplasm. It carries out the reaction [protein]-peptidylproline (omega=180) = [protein]-peptidylproline (omega=0). In terms of biological role, involved in protein export. Acts as a chaperone by maintaining the newly synthesized protein in an open conformation. Functions as a peptidyl-prolyl cis-trans isomerase. This is Trigger factor from Francisella tularensis subsp. mediasiatica (strain FSC147).